The following is a 525-amino-acid chain: Sensory neuron membrane protein 1 (525 aa).

The Cytoplasmic segment spans residues 1–11 (MLLPKELKYAA). The helical transmembrane segment at 12–32 (IAGGVAVFGLIFGWVLFPVIL) threads the bilayer. Residues 33 to 456 (KGQLKKEMAL…LKHQLFIPKR (424 aa)) lie on the Extracellular side of the membrane. Residues asparagine 67, asparagine 229, and asparagine 324 are each glycosylated (N-linked (GlcNAc...) asparagine). 3 cysteine pairs are disulfide-bonded: cysteine 268–cysteine 333, cysteine 297–cysteine 352, and cysteine 335–cysteine 341. Residue asparagine 440 is glycosylated (N-linked (GlcNAc...) asparagine). The chain crosses the membrane as a helical span at residues 457–477 (VVGVLRWWMVSFGSLGADIGI). The Cytoplasmic segment spans residues 478 to 525 (VYHFRDHIMRLAVSGDTKVSKVTPEEDPEQKDISVIGPPAQEPAKINI). The interval 497–525 (SKVTPEEDPEQKDISVIGPPAQEPAKINI) is disordered.

This sequence belongs to the CD36 family.

It is found in the cell membrane. Functionally, plays an olfactory role that is not restricted to pheromone sensitivity. The protein is Sensory neuron membrane protein 1 of Mamestra brassicae (Cabbage moth).